Consider the following 654-residue polypeptide: tRNA 5-methylaminomethyl-2-thiouridine biosynthesis bifunctional protein MnmC (654 aa).

Positions 1–235 (MSDFQHAQLD…KREMLSGTYQ (235 aa)) are tRNA (mnm(5)s(2)U34)-methyltransferase. The FAD-dependent cmnm(5)s(2)U34 oxidoreductase stretch occupies residues 261-654 (VGGGLAGCAS…LRDLVRGQRG (394 aa)).

In the N-terminal section; belongs to the methyltransferase superfamily. tRNA (mnm(5)s(2)U34)-methyltransferase family. This sequence in the C-terminal section; belongs to the DAO family. It depends on FAD as a cofactor.

Its subcellular location is the cytoplasm. The enzyme catalyses 5-aminomethyl-2-thiouridine(34) in tRNA + S-adenosyl-L-methionine = 5-methylaminomethyl-2-thiouridine(34) in tRNA + S-adenosyl-L-homocysteine + H(+). Catalyzes the last two steps in the biosynthesis of 5-methylaminomethyl-2-thiouridine (mnm(5)s(2)U) at the wobble position (U34) in tRNA. Catalyzes the FAD-dependent demodification of cmnm(5)s(2)U34 to nm(5)s(2)U34, followed by the transfer of a methyl group from S-adenosyl-L-methionine to nm(5)s(2)U34, to form mnm(5)s(2)U34. This Pseudomonas aeruginosa (strain ATCC 15692 / DSM 22644 / CIP 104116 / JCM 14847 / LMG 12228 / 1C / PRS 101 / PAO1) protein is tRNA 5-methylaminomethyl-2-thiouridine biosynthesis bifunctional protein MnmC.